The primary structure comprises 555 residues: Xylulose kinase (555 aa).

Substrate is bound by residues H88, R158, D274, and N275. Residues W357, 455 to 456 (GA), and N459 each bind ATP.

This sequence belongs to the FGGY kinase family.

The protein resides in the cytoplasm. The enzyme catalyses D-xylulose + ATP = D-xylulose 5-phosphate + ADP + H(+). The polypeptide is Xylulose kinase (Schizosaccharomyces pombe (strain 972 / ATCC 24843) (Fission yeast)).